The chain runs to 473 residues: Notchless protein homolog (473 aa).

The ubiquitin-like (UBL) domain stretch occupies residues 9-91 (GKTVMCLLTD…VLTIVYQQQA (83 aa)). WD repeat units lie at residues 107–146 (GHAEAVLCVSFSPDGKQLASGSGDTTVRLWDLYTETPLFT), 149–188 (GHKNWVLTVAWSPDGKHLVSGSKSGEICCWNPKKGELEGS), 192–236 (GHKK…SIIC), 239–277 (GHTLAVTCVKWGGDGIIYTGSQDCTIKMWETTQGKLIRE), 313–354 (EKQK…QPKK), 358–399 (GHQQ…TVFR), 400–439 (GHVGPVYQVSWSADSRLLLSGSKDSTLKIWEIRTKKLKQD), and 442–473 (GHADEVFAVDWSPDGEKVVSGGKDRVLKLWKG). A DWD box motif is present at residues 417-432 (LLSGSKDSTLKIWEIR).

This sequence belongs to the NLE1/RSA4 family. In terms of assembly, associates with the pre-60S ribosomal particle. Constitutively and ubiquitously expressed.

It is found in the nucleus. Its subcellular location is the nucleolus. In terms of biological role, required for female gametophyte development. The chain is Notchless protein homolog from Arabidopsis thaliana (Mouse-ear cress).